A 90-amino-acid chain; its full sequence is Putative defensin-like protein 168 (90 aa).

The first 27 residues, 1–27, serve as a signal peptide directing secretion; that stretch reads MKYFTLFMISYIFISIFVFSHIHDVEA. Cystine bridges form between cysteine 32–cysteine 90, cysteine 43–cysteine 66, cysteine 51–cysteine 84, and cysteine 64–cysteine 86.

Belongs to the DEFL family.

It is found in the secreted. This Arabidopsis thaliana (Mouse-ear cress) protein is Putative defensin-like protein 168.